The sequence spans 367 residues: Chorismate synthase (367 aa).

Residues 39-60 (EEFSHDLQRRASGKSRHTSARR) form a disordered region. Residues Arg-48 and Arg-54 each contribute to the NADP(+) site. FMN-binding positions include 125-127 (RSS), 238-239 (NA), Gly-278, 293-297 (KPTSS), and Arg-319.

Belongs to the chorismate synthase family. Homotetramer. FMNH2 serves as cofactor.

The enzyme catalyses 5-O-(1-carboxyvinyl)-3-phosphoshikimate = chorismate + phosphate. It functions in the pathway metabolic intermediate biosynthesis; chorismate biosynthesis; chorismate from D-erythrose 4-phosphate and phosphoenolpyruvate: step 7/7. In terms of biological role, catalyzes the anti-1,4-elimination of the C-3 phosphate and the C-6 proR hydrogen from 5-enolpyruvylshikimate-3-phosphate (EPSP) to yield chorismate, which is the branch point compound that serves as the starting substrate for the three terminal pathways of aromatic amino acid biosynthesis. This reaction introduces a second double bond into the aromatic ring system. The sequence is that of Chorismate synthase from Xanthomonas oryzae pv. oryzae (strain MAFF 311018).